A 194-amino-acid polypeptide reads, in one-letter code: Interleukin-18 (194 aa).

The propeptide occupies 1–36 (MAAMSEEGSCVNFKEMMFIDNTLYLIPEDNGDLESD).

Belongs to the IL-1 family. As to quaternary structure, forms a ternary complex with ligand-binding receptor subunit IL18R1 and signaling receptor subunit IL18RAP at the plasma membrane. Mature IL18 first binds to IL18R1 forming a low affinity binary complex, which then interacts with IL18RAP to form a high affinity ternary complex that signals inside the cell. Interacts with cargo receptor TMED10; the interaction mediates the translocation from the cytoplasm into the ERGIC (endoplasmic reticulum-Golgi intermediate compartment) and thereby secretion. The pro-IL-18 precursor is processed by CASP1 to yield its mature, active form. The pro-IL-18 precursor is however not processed by Casp4/Casp11 in rodents. The pro-IL-18 precursor features autoinhibitory interactions between the propeptide and the post-cleavage-site region, preventing recognition by the IL18R1 receptor. Processing by CASP1 induces conformational changes to generate critical receptor-binding sites. The mature form is then secreted and released in the extracellular milieu by passing through the gasdermin-D (GSDMD) pore. In contrast, cleavage by CASP3 inactivates IL18.

It is found in the cytoplasm. It localises to the cytosol. The protein localises to the secreted. Functionally, pro-inflammatory cytokine primarily involved in epithelial barrier repair, polarized T-helper 1 (Th1) cell and natural killer (NK) cell immune responses. Upon binding to IL18R1 and IL18RAP, forms a signaling ternary complex which activates NF-kappa-B, triggering synthesis of inflammatory mediators. Synergizes with IL12/interleukin-12 to induce IFNG synthesis from T-helper 1 (Th1) cells and natural killer (NK) cells. Involved in transduction of inflammation downstream of pyroptosis: its mature form is specifically released in the extracellular milieu by passing through the gasdermin-D (GSDMD) pore. This is Interleukin-18 (Il18) from Rattus norvegicus (Rat).